A 334-amino-acid polypeptide reads, in one-letter code: N-acetyl-gamma-glutamyl-phosphate reductase (334 aa).

Cys154 is a catalytic residue.

The protein belongs to the NAGSA dehydrogenase family. Type 1 subfamily.

It is found in the cytoplasm. The catalysed reaction is N-acetyl-L-glutamate 5-semialdehyde + phosphate + NADP(+) = N-acetyl-L-glutamyl 5-phosphate + NADPH + H(+). The protein operates within amino-acid biosynthesis; L-arginine biosynthesis; N(2)-acetyl-L-ornithine from L-glutamate: step 3/4. Catalyzes the NADPH-dependent reduction of N-acetyl-5-glutamyl phosphate to yield N-acetyl-L-glutamate 5-semialdehyde. In Pectobacterium carotovorum subsp. carotovorum (strain PC1), this protein is N-acetyl-gamma-glutamyl-phosphate reductase.